Here is a 506-residue protein sequence, read N- to C-terminus: Histidine--tRNA ligase, mitochondrial (506 aa).

Residues 1–33 (MHLLGLLPRRAWASLLSQLLRPPWASCTGAVRC) constitute a mitochondrion transit peptide. S67 carries the post-translational modification Phosphoserine. Residues 131 to 133 (DLT), R158, Q174, D178, R327, and 331 to 332 (YY) each bind L-histidine. N6-acetyllysine is present on K444.

This sequence belongs to the class-II aminoacyl-tRNA synthetase family. Homodimer.

Its subcellular location is the mitochondrion. The enzyme catalyses tRNA(His) + L-histidine + ATP = L-histidyl-tRNA(His) + AMP + diphosphate + H(+). Mitochondrial aminoacyl-tRNA synthetase that catalyzes the ATP-dependent ligation of histidine to the 3'-end of its cognate tRNA, via the formation of an aminoacyl-adenylate intermediate (His-AMP). This Pongo abelii (Sumatran orangutan) protein is Histidine--tRNA ligase, mitochondrial (HARS2).